A 344-amino-acid chain; its full sequence is Gas vesicle ATPase GvpN2 (344 aa).

The interval 1–55 is disordered; sequence MTDTSRNRKVRGSKIRSSRSDKRQSRGSEDKELKRLADARDTDSEQAGDRVGDAF. Residues 7-17 are compositionally biased toward basic residues; that stretch reads NRKVRGSKIRS. Over residues 18-52 the composition is skewed to basic and acidic residues; the sequence is SRSDKRQSRGSEDKELKRLADARDTDSEQAGDRVG. 89 to 96 is a binding site for ATP; it reads GPTGCGKT.

Belongs to the CbbQ/NirQ/NorQ/GpvN family. In terms of assembly, forms homodimers, a GvpN-GvpO heterodimer, interacts with GvpC and GvpL, might interact with GvpA.

It localises to the gas vesicle. The protein resides in the cytoplasm. The catalysed reaction is ATP + H2O = ADP + phosphate + H(+). Functionally, an ATPase that functions in gas vesicle formation. A minor component of the gas vesicle, also found in soluble extracts. Gas vesicles are hollow, gas filled proteinaceous nanostructures found in several microbial planktonic microorganisms. They allow positioning of halobacteria at the optimal depth for growth in the poorly aerated, shallow brine pools of their habitat. In terms of biological role, expression of 2 c-vac DNA fragments containing 2 divergently transcribed regions (gvpE-gvpF-gvpG-gvpH-gvpI-gvpJ-gvpK-gvpL-gvpM and gvpA-gvpC-gvpN-gvpO) allows H.volcanii to produce gas vesicles. The chain is Gas vesicle ATPase GvpN2 from Halobacterium salinarum (strain ATCC 700922 / JCM 11081 / NRC-1) (Halobacterium halobium).